The primary structure comprises 141 residues: Small ribosomal subunit protein bS18c (141 aa).

Disordered regions lie at residues Glu14–Gly55 and Ile120–Lys141. Pro residues predominate over residues Pro24–Pro34. Residues Ser35–Arg51 are compositionally biased toward basic residues.

Belongs to the bacterial ribosomal protein bS18 family. As to quaternary structure, part of the 30S ribosomal subunit.

The protein resides in the plastid. Its subcellular location is the chloroplast. This Pelargonium hortorum (Common geranium) protein is Small ribosomal subunit protein bS18c.